Here is a 75-residue protein sequence, read N- to C-terminus: Chaplin-D (75 aa).

The N-terminal stretch at 1-23 is a signal peptide; that stretch reads MKKSAAVVAGAIMALGMAAPAFA. Residues 34–74 form the Chaplin domain; sequence SPGVLSGNVIQVPVHVPVNVCGNSINVVGLLNPAFGNKCEN. A disulfide bridge links C54 with C72.

Belongs to the chaplin family. Short chaplin subfamily.

Its subcellular location is the cell surface. The protein localises to the secreted. The protein resides in the cell wall. It is found in the fimbrium. Its function is as follows. One of 8 partially redundant surface-active proteins required for efficient formation of aerial mycelium; the short chaplins assemble into a hydrophobic, amyloidal fibrillar surface layer that envelopes and protects aerial hyphae and spores, presumably anchored to the long chaplins. Chaplins have an overlapping function with the surface-active SapB peptide; chaplins are essential on minimal medium while on rich medium both chaplins and SapB are required for efficient aerial hyphae formation. Chaplins are also involved in cell attachment to a hydrophobic surface. Forms amyloid fibrils in vitro probably composed of stacked beta-sheets, at low extracellular concentrations individually restores the ability to form aerial hyphae to a chaplin-deficient strain. A small chaplin extract (ChpD, ChpE, ChpF, ChpG and ChpH) self-assembles into 2 different amyloids; small fibrils at the air-water interface form an amphipathic membrane that resembles spore-surface structures involved in aerial hyphae formation, and hydrophilic fibrils in solution that resemble the fibers that attach cells to a hydrophobic surface. At the air-water interface the hydrophilic surface is in contact with water (probably equivalent to the peptidoglycan layer), while the hydrophobic face is exposed to the air, making the surface of the aerial hyphae hydrophobic. A minimal chaplin strain capable of forming aerial mycelium/hyphae on minimal medium contains ChpC, ChpE and ChpH. The strain also has restored rodlet formation on the hyphae surface. A second minimal chaplin strain with ChpA, ChpD and ChpE makes slightly less robust hyphae. A small chaplin extract applied to a chaplin-deficient strain restores aerial hyphae formation. The small chaplin extract forms an amyloid-like structure similar to that seen on the surface of cells without rodlets (rdlA-rdlB deletions), and is highly surface active, reducing surface tension from 72 to 26 mJ/m(2), which probably allows escape of hyphae from an aqueous environment into air. The polypeptide is Chaplin-D (Streptomyces coelicolor (strain ATCC BAA-471 / A3(2) / M145)).